We begin with the raw amino-acid sequence, 278 residues long: Large ribosomal subunit protein uL2 (278 aa).

Disordered stretches follow at residues 26–57 (RSTP…QGGG) and 225–278 (VMNP…NKKR). Residues 258 to 278 (RSPKKASNKYIVRRRKTNKKR) show a composition bias toward basic residues.

It belongs to the universal ribosomal protein uL2 family. In terms of assembly, part of the 50S ribosomal subunit. Forms a bridge to the 30S subunit in the 70S ribosome.

Its function is as follows. One of the primary rRNA binding proteins. Required for association of the 30S and 50S subunits to form the 70S ribosome, for tRNA binding and peptide bond formation. It has been suggested to have peptidyltransferase activity; this is somewhat controversial. Makes several contacts with the 16S rRNA in the 70S ribosome. The chain is Large ribosomal subunit protein uL2 from Streptomyces coelicolor (strain ATCC BAA-471 / A3(2) / M145).